A 606-amino-acid chain; its full sequence is Dihydroxy-acid dehydratase ilvC, mitochondrial (606 aa).

Cys-84 provides a ligand contact to [2Fe-2S] cluster. Mg(2+) is bound at residue Asp-116. Cys-157 is a binding site for [2Fe-2S] cluster. Residue Asp-158 participates in Mg(2+) binding. Cys-232 is a [2Fe-2S] cluster binding site. Glu-485 contributes to the Mg(2+) binding site. The Proton acceptor role is filled by Ser-511.

This sequence belongs to the IlvD/Edd family. [2Fe-2S] cluster serves as cofactor. The cofactor is Mg(2+).

Its subcellular location is the mitochondrion. It carries out the reaction (2R)-2,3-dihydroxy-3-methylbutanoate = 3-methyl-2-oxobutanoate + H2O. It catalyses the reaction (2R,3R)-2,3-dihydroxy-3-methylpentanoate = (S)-3-methyl-2-oxopentanoate + H2O. The protein operates within amino-acid biosynthesis; L-isoleucine biosynthesis; L-isoleucine from 2-oxobutanoate: step 3/4. It participates in amino-acid biosynthesis; L-valine biosynthesis; L-valine from pyruvate: step 3/4. Its activity is regulated as follows. DHAD activity is inhibited in dose-dependent manner by 2-hydroxy-3-methylbutyric acid with an IC(50) of about 8 mM. Dihydroxyacid dehydratase that catalyzes the third step in the common pathway leading to biosynthesis of branched-chain amino acids. Catalyzes the dehydration of (2R,3R)-2,3-dihydroxy-3-methylpentanoate (2,3-dihydroxy-3-methylvalerate) into 2-oxo-3-methylpentanoate (2-oxo-3-methylvalerate) and of (2R)-2,3-dihydroxy-3-methylbutanoate (2,3-dihydroxyisovalerate) into 2-oxo-3-methylbutanoate (2-oxoisovalerate), the penultimate precursor to L-isoleucine and L-valine, respectively. IlvC and the branched-chain amino acid biosynthesis are crucial for virulence and may be a potential target to develop antifungal agents. The polypeptide is Dihydroxy-acid dehydratase ilvC, mitochondrial (Aspergillus fumigatus (strain ATCC MYA-4609 / CBS 101355 / FGSC A1100 / Af293) (Neosartorya fumigata)).